Here is a 281-residue protein sequence, read N- to C-terminus: Pantothenate synthetase (281 aa).

Residue 30–37 (MGNLHQGH) participates in ATP binding. Residue His37 is the Proton donor of the active site. Residue Gln61 coordinates (R)-pantoate. Gln61 contributes to the beta-alanine binding site. 148–151 (GQKD) contributes to the ATP binding site. Position 154 (Gln154) interacts with (R)-pantoate. Residues Ala177 and 185-188 (LSSR) contribute to the ATP site.

This sequence belongs to the pantothenate synthetase family. As to quaternary structure, homodimer.

It localises to the cytoplasm. It catalyses the reaction (R)-pantoate + beta-alanine + ATP = (R)-pantothenate + AMP + diphosphate + H(+). Its pathway is cofactor biosynthesis; (R)-pantothenate biosynthesis; (R)-pantothenate from (R)-pantoate and beta-alanine: step 1/1. Functionally, catalyzes the condensation of pantoate with beta-alanine in an ATP-dependent reaction via a pantoyl-adenylate intermediate. The chain is Pantothenate synthetase from Acinetobacter baylyi (strain ATCC 33305 / BD413 / ADP1).